Reading from the N-terminus, the 1040-residue chain is Vacuolar membrane protease (1040 aa).

Residues 1–9 are Cytoplasmic-facing; that stretch reads MINPISFRP. A helical transmembrane segment spans residues 10–30; it reads GPVTFWTTLIYLALLIPIVII. The Vacuolar portion of the chain corresponds to 31–405; it reads NEEPPAAPKT…SFVLFGLRGM (375 aa). 4 N-linked (GlcNAc...) asparagine glycosylation sites follow: Asn-48, Asn-117, Asn-120, and Asn-129. Residues His-186 and Asp-198 each coordinate Zn(2+). The active-site Proton acceptor is Glu-232. Positions 233, 258, and 331 each coordinate Zn(2+). Residues 406-426 traverse the membrane as a helical segment; the sequence is FAWSLTLLIATPLILVGITWL. The Cytoplasmic segment spans residues 427–436; sequence LRNLDKDYFF. A helical membrane pass occupies residues 437–456; it reads TSTVKTKEHPEYEAVPIGGW. The Vacuolar segment spans residues 457–462; that stretch reads KGFFRW. Residues 463 to 483 traverse the membrane as a helical segment; sequence AMMVSIFYFSFWMIMRGANFV. Over 484 to 490 the chain is Cytoplasmic; the sequence is RPSALHR. The chain crosses the membrane as a helical span at residues 491-511; that stretch reads GYANLWLFVFGWIVLVAVTAL. Topologically, residues 512-521 are vacuolar; that stretch reads EDRRRIAAGY. The helical transmembrane segment at 522-542 threads the bilayer; the sequence is IFVFLESAIFLSCLISFVELL. The Cytoplasmic segment spans residues 543 to 715; sequence ALPRKSAYAL…YEHEQDWSGH (173 aa). A disordered region spans residues 563-680; sequence HSGYQGYRDS…NGTNDRGRTT (118 aa). Composition is skewed to low complexity over residues 577–594 and 616–626; these read SSGARAESSASAGSPSSP and APSVAAHSSQP. Polar residues predominate over residues 636–647; it reads GRSTSAPIPSTT. Acidic residues predominate over residues 650-661; it reads DEDESEDDDDEA. The chain crosses the membrane as a helical span at residues 716 to 736; that stretch reads LPSWAWFFQFLLLGPFMIILA. Over 737 to 758 the chain is Vacuolar; sequence AQTGLMLTDAVYQTGSDGSKLF. Residues 759 to 779 traverse the membrane as a helical segment; sequence TPYLMIFFFTLLLILPLTPFI. Residues 780–785 are Cytoplasmic-facing; it reads HRVTHH. A helical transmembrane segment spans residues 786–806; that stretch reads IPVFLLVVFIVTLTYNLIAFP. Topologically, residues 807–1040 are vacuolar; that stretch reads FSANNRYKAF…VEGRKAFKIV (234 aa). N-linked (GlcNAc...) asparagine glycosylation is present at Asn-900.

Belongs to the peptidase M28 family. Zn(2+) is required as a cofactor.

The protein localises to the vacuole membrane. In terms of biological role, may be involved in vacuolar sorting and osmoregulation. In Sordaria macrospora (strain ATCC MYA-333 / DSM 997 / K(L3346) / K-hell), this protein is Vacuolar membrane protease.